The primary structure comprises 445 residues: MEEVWLQAQSNLAKVLTHQTFNTWIEPIKYLGSKKNVLLLEAPNQFVRDRVSESYLPMILESVQSLTDSQTKIELLIAKPKTEKPKQPAASEVTAAEPEACSGPDHSTNLNPKYTFDTFVCGGSNQFAHAAAQSVANSPAGKYNPLFIYGGVGLGKTHLLNAIGNHVLSVNRKARICFYTSEKFMNELINCLRYQKMDQFRNKFRKMDILLIDDIQFIAGKERTQEEFFHTFNSLYESHKQIVVTSDKFPKDIPGLEERLRSRFEWGLIADIQAPDTETKVAILRKKADADHISLPDDVALFLASSSTTNVRELEGMLIRLGAVSSLTGKNITLDMAREVLKDIIVDKSKEITVEMIQKFVAEHFSLKVADLKSDKRLKALVIPRQIAIFLCRDLTKSSYPEIGERFGGKDHSTIIHSVKKVEKLLSQDFELRNTVDTLRKGLLS.

The tract at residues 1–71 (MEEVWLQAQS…SVQSLTDSQT (71 aa)) is domain I, interacts with DnaA modulators. Residues 71-108 (TKIELLIAKPKTEKPKQPAASEVTAAEPEACSGPDHST) form a domain II region. The tract at residues 83-106 (EKPKQPAASEVTAAEPEACSGPDH) is disordered. A domain III, AAA+ region region spans residues 109–325 (NLNPKYTFDT…GMLIRLGAVS (217 aa)). Residues G153, G155, K156, and T157 each coordinate ATP. Residues 326 to 445 (SLTGKNITLD…VDTLRKGLLS (120 aa)) are domain IV, binds dsDNA.

This sequence belongs to the DnaA family. As to quaternary structure, oligomerizes as a right-handed, spiral filament on DNA at oriC.

It localises to the cytoplasm. In terms of biological role, plays an essential role in the initiation and regulation of chromosomal replication. ATP-DnaA binds to the origin of replication (oriC) to initiate formation of the DNA replication initiation complex once per cell cycle. Binds the DnaA box (a 9 base pair repeat at the origin) and separates the double-stranded (ds)DNA. Forms a right-handed helical filament on oriC DNA; dsDNA binds to the exterior of the filament while single-stranded (ss)DNA is stabiized in the filament's interior. The ATP-DnaA-oriC complex binds and stabilizes one strand of the AT-rich DNA unwinding element (DUE), permitting loading of DNA polymerase. After initiation quickly degrades to an ADP-DnaA complex that is not apt for DNA replication. Binds acidic phospholipids. This chain is Chromosomal replication initiator protein DnaA, found in Geobacter sulfurreducens (strain ATCC 51573 / DSM 12127 / PCA).